Reading from the N-terminus, the 155-residue chain is Endoribonuclease YbeY (155 aa).

Zn(2+) contacts are provided by histidine 114, histidine 118, and histidine 124.

This sequence belongs to the endoribonuclease YbeY family. Zn(2+) serves as cofactor.

Its subcellular location is the cytoplasm. Functionally, single strand-specific metallo-endoribonuclease involved in late-stage 70S ribosome quality control and in maturation of the 3' terminus of the 16S rRNA. In Tolumonas auensis (strain DSM 9187 / NBRC 110442 / TA 4), this protein is Endoribonuclease YbeY.